The following is a 182-amino-acid chain: Regulatory protein RecX (182 aa).

A disordered region spans residues 12–54 (LSQRDHSESELRRKLAAPPFSAKGNWGKRSGAKSSNLVESNPV). A compositionally biased stretch (basic and acidic residues) spans 13 to 24 (SQRDHSESELRR). Polar residues predominate over residues 43-54 (AKSSNLVESNPV).

The protein belongs to the RecX family.

It is found in the cytoplasm. Modulates RecA activity. The polypeptide is Regulatory protein RecX (Yersinia pseudotuberculosis serotype I (strain IP32953)).